Here is a 1215-residue protein sequence, read N- to C-terminus: Endoplasmic reticulum transmembrane helix translocase (1215 aa).

The Cytoplasmic portion of the chain corresponds to 1-27 (MTKKSFVSSPIVRDSTLLVPKSLIAKP). A helical transmembrane segment spans residues 28 to 43 (YVLPFFPLYATFAQLY). At 44–56 (FQQYDRYIKGPEW) the chain is on the lumenal side. A helical transmembrane segment spans residues 57-76 (TFVYLGTLVSLNILVMLMPA). The Cytoplasmic segment spans residues 77–188 (WNVKIKAKFN…ENSFDIPIPT (112 aa)). The segment at 156–185 (KIGDFQKCKGHSGDLTHLKRLYGENSFDIP) is A-domain; part 1. Residues 189-216 (FMELFKEHAVAPLFVFQVFCVALWLLDE) form a helical membrane-spanning segment. Residue Phe217 is a topological domain, lumenal. Residues 218–246 (WYYSLFNLFMIISMEAAAVFQRLTALKEF) form a helical membrane-spanning segment. At 247 to 395 (RTMGIKPYTI…IYSAERVSVD (149 aa)) the chain is on the cytoplasmic side. Positions 250 to 390 (GIKPYTINVF…LVRVMIYSAE (141 aa)) are A-domain; part 2. Position 324 is a phosphoserine (Ser324). Residues 396-425 (NKEALMFILFLLIFAVIASWYVWVEGTKMG) traverse the membrane as a helical segment. Topologically, residues 426–427 (RI) are lumenal. A run of 2 helical transmembrane segments spans residues 428–442 (QSKLILDCILIITSV) and 446–464 (ELPMELTMAVNSSLAALAK). The Cytoplasmic portion of the chain corresponds to 465 to 971 (FYVYCTEPFR…APFTSKLANV (507 aa)). Positions 466–495 (YVYCTEPFRIPFAGRIDVCCFDKTGTLTGE) are P-domain; part 1. Asp487 (4-aspartylphosphate intermediate) is an active-site residue. Residues Asp487 and Thr489 each contribute to the Mg(2+) site. ATP is bound by residues 487-489 (DKT), Phe582, Arg634, Asp699, and 816-820 (DGTND). Residues 497–674 (LVFEGLAGIS…FNGFLIFHCP (178 aa)) are N-domain. The P-domain; part 2 stretch occupies residues 677–837 (DDAIETIKML…HVGIALLNGT (161 aa)). Residue Asp816 coordinates Mg(2+). Residues 838-953 (EEGLKKLGEQ…DAQGDEAPAL (116 aa)) are arm-like. Ser936 carries the phosphoserine modification. Residues 954-969 (KLGDASCAAPFTSKLA) form a P-domain; part 3 region. A helical membrane pass occupies residues 972–1011 (SAVTNIIRQGRCALVNTIQMYKILALNCLISAYSLSIIYM). Residues 1012–1017 (AGVKFG) are Lumenal-facing. A helical membrane pass occupies residues 1018-1035 (DGQATVSGLLLSVCFLSI). The Cytoplasmic segment spans residues 1036–1055 (SRGKPLEKLSKQRPQSGIFN). A helical membrane pass occupies residues 1056-1084 (VYIMGSILSQFAVHIATLVYITTEIYKLE). Residues 1085–1099 (PREPQVDLEKEFAPS) lie on the Lumenal side of the membrane. A helical transmembrane segment spans residues 1100 to 1121 (LLNTGIFIIQLVQQVSTFAVNY). The Cytoplasmic portion of the chain corresponds to 1122-1133 (QGEPFRENIRSN). A helical membrane pass occupies residues 1134–1151 (KGMYYGLLGVTGLALASA). Residues 1152-1168 (TEFLPELNEAMKFVPMT) are Lumenal-facing. The helical transmembrane segment at 1169–1197 (DDFKIKLTLTLLLDFFGSWGVEHFFKFFF) threads the bilayer. The Cytoplasmic portion of the chain corresponds to 1198–1215 (MDDKPSDISVQQVKIASK).

It belongs to the cation transport ATPase (P-type) (TC 3.A.3) family. Type V subfamily. Requires Mg(2+) as cofactor.

Its subcellular location is the endoplasmic reticulum membrane. The catalysed reaction is [protein]-with a C-terminal TM segment(out) + ATP + H2O = [protein]-with a C-terminal TM segment(in) + ADP + phosphate + H(+). With respect to regulation, the ATPase activity is stimulated by phosphatidylinositol 4-phosphate (PI4P). Functionally, endoplasmic reticulum translocase required to remove mitochondrial transmembrane proteins mistargeted to the endoplasmic reticulum. Acts as a dislocase that mediates the ATP-dependent extraction of mislocalized mitochondrial transmembrane proteins from the endoplasmic reticulum membrane. Specifically binds mitochondrial tail-anchored transmembrane proteins: has an atypically large substrate-binding pocket that recognizes and binds moderately hydrophobic transmembranes with short hydrophilic lumenal domains. The chain is Endoplasmic reticulum transmembrane helix translocase from Saccharomyces cerevisiae (strain ATCC 204508 / S288c) (Baker's yeast).